A 502-amino-acid chain; its full sequence is Lysine--tRNA ligase (502 aa).

Mg(2+) is bound by residues Glu399 and Glu406.

It belongs to the class-II aminoacyl-tRNA synthetase family. In terms of assembly, homodimer. Mg(2+) is required as a cofactor.

The protein resides in the cytoplasm. The enzyme catalyses tRNA(Lys) + L-lysine + ATP = L-lysyl-tRNA(Lys) + AMP + diphosphate. The protein is Lysine--tRNA ligase of Synechococcus sp. (strain RCC307).